A 161-amino-acid chain; its full sequence is Cap-associated protein CAF20 (161 aa).

Over residues 52-72 the composition is skewed to basic residues; it reads HFGRRRSSHHHGRPKIKHNKP. Positions 52–108 are disordered; it reads HFGRRRSSHHHGRPKIKHNKPKVTTDSDGWCTFEAKKKGSGEDDEEETETTPTSTVP. 2 positions are modified to phosphoserine: Ser78 and Ser91. 3 positions are modified to phosphothreonine: Thr99, Thr101, and Thr102. Ser154 bears the Phosphoserine mark.

This sequence belongs to the CAF20 family. As to quaternary structure, interacts with TIF45. Post-translationally, phosphorylated by casein kinase II complex (CK2).

Its subcellular location is the cytoplasm. In terms of biological role, acts as an inhibitor of cap-dependent translation. Competes with eIF4G1/TIF4631 and EAP1 for binding to eIF4E/TIF45 and interferes with the formation of the eIF4F complex, inhibiting translation and stabilizing mRNA. Binding affinity for eIF4E/TIF45 is 10-fold less than that of eIF4G1/TIF4631. Required for induction of pseudohyphal growth in response to nitrogen limitation, probably by regulating STE12 translation. The polypeptide is Cap-associated protein CAF20 (CAF20) (Saccharomyces cerevisiae (strain YJM789) (Baker's yeast)).